A 356-amino-acid polypeptide reads, in one-letter code: Protein HEXIM1 (356 aa).

2 stretches are compositionally biased toward basic and acidic residues: residues 1-11 (MAEPLLSEHQH) and 24-47 (VHEEQNSERPPSAEERVPKEDSRW). The segment at 1 to 160 (MAEPLLSEHQ…RRRPSKKKRH (160 aa)) is disordered. The segment covering 48–58 (QSRASLQSGSR) has biased composition (polar residues). The span at 84–93 (CLEKGEKGQN) shows a compositional bias: basic and acidic residues. Residues Ser98 and Ser103 each carry the phosphoserine modification. Positions 145 to 160 (LGKKKHRRRPSKKKRH) are enriched in basic residues. Residues 147–174 (KKKHRRRPSKKKRHWKPYYKLTWEEKKK) are basic region; mediates nuclear localization and interaction with 7SK snRNA and NR3C1. An interaction with P-TEFb region spans residues 199 to 202 (PYNT). Residues 207–247 (MDDHDQEEPDLKTGLYPKRAAAKSDDTSDEDFVEEAGEEDG) are autoinhibitory acidic region; in absence of 7SK snRNA interacts with the basic region preventing interaction with P-TEFb and modulating subcellular localization. The interval 209-259 (DHDQEEPDLKTGLYPKRAAAKSDDTSDEDFVEEAGEEDGGSDGMGGDGSEF) is disordered. At Ser230 the chain carries Phosphoserine. At Thr233 the chain carries Phosphothreonine. Residues 233–248 (TSDEDFVEEAGEEDGG) show a composition bias toward acidic residues. Phosphoserine occurs at positions 234, 249, and 257. Residues 280–346 (SKQELIKEYL…LTENELHRQQ (67 aa)) adopt a coiled-coil conformation. Positions 283–311 (ELIKEYLELEKCLSRKEDENNRLRLESKR) are mediates interaction with CCNT1. A required for inhibition of ESR1-dependent transcription region spans residues 307–352 (LESKRLGGVDARVRELELELDRLRAENRQLLTENELHRQQERAPPS). The segment at 337-356 (LTENELHRQQERAPPSKFGD) is disordered.

This sequence belongs to the HEXIM family. As to quaternary structure, homooligomer and heterooligomer with HEXIM2; probably dimeric. Core component of the 7SK RNP complex, at least composed of 7SK RNA, LARP7, MEPCE, HEXIM1 (or HEXIM2) and P-TEFb (composed of CDK9 and CCNT1/cyclin-T1). Interacts with the N-CoR complex through NCOR1. Interacts with ESR1 and NR3C1. May interact with NF-kappa-B through RELA. Interacts with CCNT2; mediates formation of a tripartite complex with KPNA2. Part of the HDP-RNP complex composed of at least HEXIM1, PRKDC, XRCC5, XRCC6, paraspeckle proteins (SFPQ, NONO, PSPC1, RBM14, and MATR3) and NEAT1 non-coding RNA.

Its subcellular location is the nucleus. The protein resides in the cytoplasm. In terms of biological role, transcriptional regulator which functions as a general RNA polymerase II transcription inhibitor. Core component of the 7SK RNP complex: in cooperation with 7SK snRNA sequesters P-TEFb in a large inactive 7SK snRNP complex preventing RNA polymerase II phosphorylation and subsequent transcriptional elongation. May also regulate NF-kappa-B, ESR1, NR3C1 and CIITA-dependent transcriptional activity. Plays a role in the regulation of DNA virus-mediated innate immune response by assembling into the HDP-RNP complex, a complex that serves as a platform for IRF3 phosphorylation and subsequent innate immune response activation through the cGAS-STING pathway. The protein is Protein HEXIM1 (Hexim1) of Rattus norvegicus (Rat).